Consider the following 129-residue polypeptide: Small ribosomal subunit protein uS11 (129 aa).

In terms of assembly, part of the 30S ribosomal subunit. Interacts with proteins S7 and S18. Binds to IF-3. In terms of processing, may be methylated on an undetermined residue.

In terms of biological role, located on the platform of the 30S subunit, it bridges several disparate RNA helices of the 16S rRNA. Forms part of the Shine-Dalgarno cleft in the 70S ribosome. The sequence is that of Small ribosomal subunit protein uS11 from Rhodopseudomonas palustris (strain ATCC BAA-98 / CGA009).